The sequence spans 165 residues: Large ribosomal subunit protein uL15 (165 aa).

A disordered region spans residues 1–44; it reads MSLNQLKAPRGANRAKKRVGRGQGSGLGKTAGRGGKGQKARSGN. A compositionally biased stretch (gly residues) spans 21 to 37; sequence RGQGSGLGKTAGRGGKG.

This sequence belongs to the universal ribosomal protein uL15 family. Part of the 50S ribosomal subunit.

Functionally, binds to the 23S rRNA. This chain is Large ribosomal subunit protein uL15, found in Anaeromyxobacter dehalogenans (strain 2CP-1 / ATCC BAA-258).